The chain runs to 251 residues: Zinc import ATP-binding protein ZnuC (251 aa).

The ABC transporter domain maps to 5-220; sequence VSLENVSVSF…PEFISMFGPR (216 aa). 37-44 lines the ATP pocket; that stretch reads GPNGAGKS.

This sequence belongs to the ABC transporter superfamily. Zinc importer (TC 3.A.1.15.5) family. The complex is composed of two ATP-binding proteins (ZnuC), two transmembrane proteins (ZnuB) and a solute-binding protein (ZnuA).

Its subcellular location is the cell inner membrane. It catalyses the reaction Zn(2+)(out) + ATP(in) + H2O(in) = Zn(2+)(in) + ADP(in) + phosphate(in) + H(+)(in). In terms of biological role, part of the ABC transporter complex ZnuABC involved in zinc import. Responsible for energy coupling to the transport system. Seems to be important for the virulence. This Salmonella typhimurium (strain LT2 / SGSC1412 / ATCC 700720) protein is Zinc import ATP-binding protein ZnuC.